Reading from the N-terminus, the 291-residue chain is N-acetylmannosamine kinase (291 aa).

ATP contacts are provided by residues 5–12 (AIDIGGTK) and 132–139 (GVGGGVVS). Zn(2+) contacts are provided by His-156, Cys-166, Cys-168, and Cys-173.

It belongs to the ROK (NagC/XylR) family. NanK subfamily. Homodimer.

It catalyses the reaction an N-acyl-D-mannosamine + ATP = an N-acyl-D-mannosamine 6-phosphate + ADP + H(+). Its pathway is amino-sugar metabolism; N-acetylneuraminate degradation; D-fructose 6-phosphate from N-acetylneuraminate: step 2/5. Catalyzes the phosphorylation of N-acetylmannosamine (ManNAc) to ManNAc-6-P. In Escherichia coli (strain ATCC 8739 / DSM 1576 / NBRC 3972 / NCIMB 8545 / WDCM 00012 / Crooks), this protein is N-acetylmannosamine kinase.